A 260-amino-acid polypeptide reads, in one-letter code: Proliferating cell nuclear antigen (260 aa).

Residues 61–80 (RCDRNLSMGMNLGSMAKILK) mediate DNA binding.

It belongs to the PCNA family. In terms of assembly, homotrimer. Forms a complex with activator 1 heteropentamer in the presence of ATP. Interacts with E2f. Interacts with the catalytic subunits of two DNA polymerase complexes: PolD1 from the delta complex and PolE1/DNApol-epsilon255 from the epsilon complex. Expressed at high levels in adult ovary.

The protein localises to the nucleus. It is found in the chromosome. It localises to the cytoplasm. Its function is as follows. Likely to be an auxiliary protein of DNA polymerase delta complex and is probably involved in the control of DNA replication and repair by increasing the polymerase's processibility. This Drosophila melanogaster (Fruit fly) protein is Proliferating cell nuclear antigen.